The following is a 234-amino-acid chain: Ubiquinone biosynthesis O-methyltransferase (234 aa).

S-adenosyl-L-methionine-binding residues include Arg-39, Gly-59, Asp-80, and Met-124.

The protein belongs to the methyltransferase superfamily. UbiG/COQ3 family.

It carries out the reaction a 3-demethylubiquinol + S-adenosyl-L-methionine = a ubiquinol + S-adenosyl-L-homocysteine + H(+). The catalysed reaction is a 3-(all-trans-polyprenyl)benzene-1,2-diol + S-adenosyl-L-methionine = a 2-methoxy-6-(all-trans-polyprenyl)phenol + S-adenosyl-L-homocysteine + H(+). It functions in the pathway cofactor biosynthesis; ubiquinone biosynthesis. Functionally, O-methyltransferase that catalyzes the 2 O-methylation steps in the ubiquinone biosynthetic pathway. The chain is Ubiquinone biosynthesis O-methyltransferase from Aliivibrio fischeri (strain ATCC 700601 / ES114) (Vibrio fischeri).